The sequence spans 292 residues: Cyclin-dependent kinase 5 (292 aa).

The Protein kinase domain maps to 4–286; sequence YEKLEKIGEG…AEEALQHPYF (283 aa). Residues 10–18 and Lys-33 contribute to the ATP site; that span reads IGEGTYGTV. Tyr-15 is modified (phosphotyrosine; by ABL1, EPHA4 and FYN). Thr-17 is modified (phosphothreonine). Lys-56 carries the post-translational modification N6-acetyllysine. Phosphoserine is present on Ser-72. Asp-126 functions as the Proton acceptor in the catalytic mechanism. Position 159 is a phosphoserine (Ser-159).

This sequence belongs to the protein kinase superfamily. CMGC Ser/Thr protein kinase family. CDC2/CDKX subfamily. Heterodimer composed of a catalytic subunit CDK5 and a regulatory subunit CDK5R1 (p25) and macromolecular complex composed of at least CDK5, CDK5R1 (p35) and CDK5RAP1 or CDK5RAP2 or CDK5RAP3. Only the heterodimer shows kinase activity. Under neurotoxic stress and neuronal injury conditions, p35 is cleaved by calpain to generate p25 that hyperactivates CDK5, that becomes functionally disabled and often toxic. Found in a trimolecular complex with CABLES1 and ABL1. Interacts with CABLES1 and CABLES2. Interacts with AATK and GSTP1. Binds to HDAC1 when in complex with p25. Interaction with myristoylation p35 promotes CDK5 association with membranes. Both isoforms 1 and 2 interacts with beta-catenin/CTNNB1. Interacts with delta-catenin/CTNND2 and APEX1. Interacts with P53/TP53 in neurons. Interacts with EPHA4; may mediate the activation of NGEF by EPHA4. Interacts with PTK2/FAK1. The complex p35/CDK5 interacts with CLOCK. Interacts with HTR6. Post-translationally, phosphorylation on Tyr-15 by ABL1 and FYN, and on Ser-159 by casein kinase 1 promotes kinase activity. By contrast, phosphorylation at Thr-14 inhibits activity. In terms of processing, phosphorylation at Ser-159 is essential for maximal catalytic activity. In terms of tissue distribution, ubiquitously expressed. Accumulates in cortical neurons (at protein level). As to expression, expressed in the testis, skeletal muscle, colon, bone marrow and ovary.

It localises to the cytoplasm. It is found in the nucleus. The protein resides in the cell membrane. The protein localises to the perikaryon. Its subcellular location is the cell projection. It localises to the lamellipodium. It is found in the growth cone. The protein resides in the postsynaptic density. The protein localises to the synapse. The enzyme catalyses L-seryl-[protein] + ATP = O-phospho-L-seryl-[protein] + ADP + H(+). The catalysed reaction is L-threonyl-[protein] + ATP = O-phospho-L-threonyl-[protein] + ADP + H(+). With respect to regulation, inhibited by 2-(1-ethyl-2-hydroxyethylamino)-6-benzylamino-9-isopropylpurine (roscovitine), 1-isopropyl-4-aminobenzyl-6-ether-linked benzimidazoles, resveratrol, AT-7519 and olomoucine. Activated by CDK5R1 (p35) and CDK5R2 (p39) during the development of the nervous system; degradation of CDK5R1 (p35) and CDK5R2 (p39) by proteasome result in down regulation of kinase activity, during this process, CDK5 phosphorylates p35 and induces its ubiquitination and subsequent degradation. Kinase activity is mainly determined by the amount of p35 available and subcellular location; reversible association to plasma membrane inhibits activity. Long-term inactivation as well as CDK5R1 (p25)-mediated hyperactivation of CDK5 triggers cell death. The pro-death activity of hyperactivated CDK5 is suppressed by membrane association of CDK5, via myristoylation of p35. Brain-derived neurotrophic factor, glial-derived neurotrophic factor, nerve growth factor (NGF), retinoic acid, laminin and neuregulin promote activity. Neurotoxicity enhances nuclear activity, thus leading to MEF2 phosphorylation and inhibition prior to apoptosis of cortical neurons. Repression by GSTP1 via p25/p35 translocation prevents neurodegeneration. Its function is as follows. Proline-directed serine/threonine-protein kinase essential for neuronal cell cycle arrest and differentiation and may be involved in apoptotic cell death in neuronal diseases by triggering abortive cell cycle re-entry. Interacts with D1 and D3-type G1 cyclins. Phosphorylates SRC, NOS3, VIM/vimentin, p35/CDK5R1, MEF2A, SIPA1L1, SH3GLB1, PXN, PAK1, MCAM/MUC18, SEPT5, SYN1, DNM1, AMPH, SYNJ1, CDK16, RAC1, RHOA, CDC42, TONEBP/NFAT5, MAPT/TAU, MAP1B, histone H1, p53/TP53, HDAC1, APEX1, PTK2/FAK1, huntingtin/HTT, ATM, MAP2, NEFH and NEFM. Regulates several neuronal development and physiological processes including neuronal survival, migration and differentiation, axonal and neurite growth, synaptogenesis, oligodendrocyte differentiation, synaptic plasticity and neurotransmission, by phosphorylating key proteins. Negatively regulates the CACNA1B/CAV2.2 -mediated Ca(2+) release probability at hippocampal neuronal soma and synaptic terminals. Activated by interaction with CDK5R1 (p35) and CDK5R2 (p39), especially in postmitotic neurons, and promotes CDK5R1 (p35) expression in an autostimulation loop. Phosphorylates many downstream substrates such as Rho and Ras family small GTPases (e.g. PAK1, RAC1, RHOA, CDC42) or microtubule-binding proteins (e.g. MAPT/TAU, MAP2, MAP1B), and modulates actin dynamics to regulate neurite growth and/or spine morphogenesis. Also phosphorylates exocytosis associated proteins such as MCAM/MUC18, SEPT5, SYN1, and CDK16/PCTAIRE1 as well as endocytosis associated proteins such as DNM1, AMPH and SYNJ1 at synaptic terminals. In the mature central nervous system (CNS), regulates neurotransmitter movements by phosphorylating substrates associated with neurotransmitter release and synapse plasticity; synaptic vesicle exocytosis, vesicles fusion with the presynaptic membrane, and endocytosis. Promotes cell survival by activating anti-apoptotic proteins BCL2 and STAT3, and negatively regulating of JNK3/MAPK10 activity. Phosphorylation of p53/TP53 in response to genotoxic and oxidative stresses enhances its stabilization by preventing ubiquitin ligase-mediated proteasomal degradation, and induces transactivation of p53/TP53 target genes, thus regulating apoptosis. Phosphorylation of p35/CDK5R1 enhances its stabilization by preventing calpain-mediated proteolysis producing p25/CDK5R1 and avoiding ubiquitin ligase-mediated proteasomal degradation. During aberrant cell-cycle activity and DNA damage, p25/CDK5 activity elicits cell-cycle activity and double-strand DNA breaks that precedes neuronal death by deregulating HDAC1. DNA damage triggered phosphorylation of huntingtin/HTT in nuclei of neurons protects neurons against polyglutamine expansion as well as DNA damage mediated toxicity. Phosphorylation of PXN reduces its interaction with PTK2/FAK1 in matrix-cell focal adhesions (MCFA) during oligodendrocytes (OLs) differentiation. Negative regulator of Wnt/beta-catenin signaling pathway. Activator of the GAIT (IFN-gamma-activated inhibitor of translation) pathway, which suppresses expression of a post-transcriptional regulon of proinflammatory genes in myeloid cells; phosphorylates the linker domain of glutamyl-prolyl tRNA synthetase (EPRS) in a IFN-gamma-dependent manner, the initial event in assembly of the GAIT complex. Phosphorylation of SH3GLB1 is required for autophagy induction in starved neurons. Phosphorylation of TONEBP/NFAT5 in response to osmotic stress mediates its rapid nuclear localization. MEF2 is inactivated by phosphorylation in nucleus in response to neurotoxin, thus leading to neuronal apoptosis. APEX1 AP-endodeoxyribonuclease is repressed by phosphorylation, resulting in accumulation of DNA damage and contributing to neuronal death. NOS3 phosphorylation down regulates NOS3-derived nitrite (NO) levels. SRC phosphorylation mediates its ubiquitin-dependent degradation and thus leads to cytoskeletal reorganization. May regulate endothelial cell migration and angiogenesis via the modulation of lamellipodia formation. Involved in dendritic spine morphogenesis by mediating the EFNA1-EPHA4 signaling. The complex p35/CDK5 participates in the regulation of the circadian clock by modulating the function of CLOCK protein: phosphorylates CLOCK at 'Thr-451' and 'Thr-461' and regulates the transcriptional activity of the CLOCK-BMAL1 heterodimer in association with altered stability and subcellular distribution. The polypeptide is Cyclin-dependent kinase 5 (Homo sapiens (Human)).